A 393-amino-acid chain; its full sequence is Chalcone synthase DII (393 aa).

Cys-164 is a catalytic residue.

This sequence belongs to the thiolase-like superfamily. Chalcone/stilbene synthases family.

It catalyses the reaction (E)-4-coumaroyl-CoA + 3 malonyl-CoA + 3 H(+) = 2',4,4',6'-tetrahydroxychalcone + 3 CO2 + 4 CoA. It functions in the pathway secondary metabolite biosynthesis; flavonoid biosynthesis. The primary product of this enzyme is 4,2',4',6'-tetrahydroxychalcone (also termed naringenin-chalcone or chalcone) which can under specific conditions spontaneously isomerize into naringenin. This is Chalcone synthase DII (CHS-DII) from Ipomoea batatas (Sweet potato).